A 190-amino-acid polypeptide reads, in one-letter code: Ribosome maturation factor RimM (190 aa).

The region spanning 95 to 177 (EDDEFFYTDL…AGLIDSPDDL (83 aa)) is the PRC barrel domain. The interval 170-190 (LIDSPDDLTGKPPKPPGKTKE) is disordered. Residues 181–190 (PPKPPGKTKE) are compositionally biased toward pro residues.

The protein belongs to the RimM family. Binds ribosomal protein uS19.

Its subcellular location is the cytoplasm. An accessory protein needed during the final step in the assembly of 30S ribosomal subunit, possibly for assembly of the head region. Essential for efficient processing of 16S rRNA. May be needed both before and after RbfA during the maturation of 16S rRNA. It has affinity for free ribosomal 30S subunits but not for 70S ribosomes. This is Ribosome maturation factor RimM from Rhizobium rhizogenes (strain K84 / ATCC BAA-868) (Agrobacterium radiobacter).